We begin with the raw amino-acid sequence, 119 residues long: uncharacterized protein (119 aa).

The stretch at 63 to 104 (KKIKKELESNSEKRKAALQMIKEEHTAKVDRYKMIIEDLRQQ) forms a coiled coil.

This is an uncharacterized protein from Bacillus subtilis (strain 168).